We begin with the raw amino-acid sequence, 495 residues long: RNA-binding KH domain-containing protein PEPPER (495 aa).

KH domains lie at aspartate 73–valine 140, phenylalanine 165–isoleucine 234, and glutamine 340–isoleucine 403. Residues glycine 474 to leucine 495 form a disordered region.

In terms of assembly, interacts with HUA1 and HEN4. In terms of tissue distribution, detected in roots, shoots, leaves, flowers and fruits.

It is found in the nucleus. Regulates vegetative and gynoecium development. In concert with HUA2, antagonizes FLK by positively regulating FLC probably at transcriptional and post-transcriptional levels, and thus acts as a negative regulator of flowering. This chain is RNA-binding KH domain-containing protein PEPPER, found in Arabidopsis thaliana (Mouse-ear cress).